Here is a 101-residue protein sequence, read N- to C-terminus: Apolipoprotein C-II (101 aa).

The N-terminal stretch at 1–22 (MGTRFLLALCLVLLVLGFEVQG) is a signal peptide. Positions 66–74 (AVDEKLRDL) are lipid binding. Residues 78 to 101 (STAAMSTYTGIFTDQVLSVLKGEE) form a lipoprotein lipase cofactor region.

This sequence belongs to the apolipoprotein C2 family. In terms of processing, proapolipoprotein C-II is synthesized as a sialic acid containing glycoprotein which is subsequently desialylated prior to its proteolytic processing. Proapolipoprotein C-II, the major form found in plasma undergoes proteolytic cleavage of its N-terminal hexapeptide to generate apolipoprotein C-II, which occurs as the minor form in plasma.

It is found in the secreted. Functionally, component of chylomicrons, very low-density lipoproteins (VLDL), low-density lipoproteins (LDL), and high-density lipoproteins (HDL) in plasma. Plays an important role in lipoprotein metabolism as an activator of lipoprotein lipase. Both proapolipoprotein C-II and apolipoprotein C-II can activate lipoprotein lipase. The sequence is that of Apolipoprotein C-II (APOC2) from Macaca fascicularis (Crab-eating macaque).